A 239-amino-acid polypeptide reads, in one-letter code: Ribonuclease PH (239 aa).

Residues R86 and 124–126 contribute to the phosphate site; that span reads GTR.

Belongs to the RNase PH family. In terms of assembly, homohexameric ring arranged as a trimer of dimers.

The catalysed reaction is tRNA(n+1) + phosphate = tRNA(n) + a ribonucleoside 5'-diphosphate. Phosphorolytic 3'-5' exoribonuclease that plays an important role in tRNA 3'-end maturation. Removes nucleotide residues following the 3'-CCA terminus of tRNAs; can also add nucleotides to the ends of RNA molecules by using nucleoside diphosphates as substrates, but this may not be physiologically important. Probably plays a role in initiation of 16S rRNA degradation (leading to ribosome degradation) during starvation. The chain is Ribonuclease PH from Sodalis glossinidius (strain morsitans).